Reading from the N-terminus, the 133-residue chain is MSWQAYVDEHLMCNIEDTGNHLTSSAIVGVDGSIWAQSSNFPQVKPQEIEAINKEFDGPNTLAPTGLFLGGEKYMVIQGEPGAVIRGKKGPGGVCIKKTTQALIFGIYDEPVAPGQCNMVVERLGDYLIEQGL.

A disulfide bond links C95 and C117.

This sequence belongs to the profilin family. In terms of assembly, occurs in many kinds of cells as a complex with monomeric actin in a 1:1 ratio. In terms of tissue distribution, expressed in pollen (at protein and mRNA level).

The protein resides in the cytoplasm. It is found in the cytoskeleton. Its function is as follows. Binds to actin and affects the structure of the cytoskeleton. At high concentrations, profilin prevents the polymerization of actin, whereas it enhances it at low concentrations. This Kali turgidum (Prickly saltwort) protein is Profilin Sal k 4.0201.